A 163-amino-acid chain; its full sequence is ATP synthase subunit b 1 (163 aa).

A helical membrane pass occupies residues 5 to 25 (FDATFFAFVGLVLFLALVVYL).

The protein belongs to the ATPase B chain family. As to quaternary structure, F-type ATPases have 2 components, F(1) - the catalytic core - and F(0) - the membrane proton channel. F(1) has five subunits: alpha(3), beta(3), gamma(1), delta(1), epsilon(1). F(0) has three main subunits: a(1), b(2) and c(10-14). The alpha and beta chains form an alternating ring which encloses part of the gamma chain. F(1) is attached to F(0) by a central stalk formed by the gamma and epsilon chains, while a peripheral stalk is formed by the delta and b chains.

It is found in the cell inner membrane. In terms of biological role, f(1)F(0) ATP synthase produces ATP from ADP in the presence of a proton or sodium gradient. F-type ATPases consist of two structural domains, F(1) containing the extramembraneous catalytic core and F(0) containing the membrane proton channel, linked together by a central stalk and a peripheral stalk. During catalysis, ATP synthesis in the catalytic domain of F(1) is coupled via a rotary mechanism of the central stalk subunits to proton translocation. Its function is as follows. Component of the F(0) channel, it forms part of the peripheral stalk, linking F(1) to F(0). This is ATP synthase subunit b 1 from Rhizobium leguminosarum bv. trifolii (strain WSM2304).